The chain runs to 74 residues: Conotoxin Bu4 (74 aa).

Positions 1–22 (MKLTCVVIVAVLLLTACQLIIA) are cleaved as a signal peptide. Residues 23–45 (EDSRGTQLHRALRKATKLSVSTR) constitute a propeptide that is removed on maturation. 3 disulfide bridges follow: Cys-47-Cys-63, Cys-54-Cys-66, and Cys-62-Cys-73.

It belongs to the conotoxin O1 superfamily. As to expression, expressed by the venom duct.

The protein localises to the secreted. The chain is Conotoxin Bu4 from Conus bullatus (Bubble cone).